A 382-amino-acid polypeptide reads, in one-letter code: Lactosylceramide 1,3-N-acetyl-beta-D-glucosaminyltransferase B (382 aa).

The Cytoplasmic portion of the chain corresponds to 1-13 (MAVLKMPRFKKYH). Residues 14-30 (LRLMITCFSTLLLMTYW) traverse the membrane as a helical; Signal-anchor for type II membrane protein segment. The Lumenal portion of the chain corresponds to 31–382 (EKIDNCVVTH…CKAAFFEEDT (352 aa)). Residues Asn-57, Asn-112, Asn-167, and Asn-276 are each glycosylated (N-linked (GlcNAc...) asparagine).

The protein belongs to the glycosyltransferase 31 family.

It localises to the golgi apparatus membrane. The enzyme catalyses a beta-D-Gal-(1-&gt;4)-beta-D-Glc-(1&lt;-&gt;1)-Cer(d18:1(4E)) + UDP-N-acetyl-alpha-D-glucosamine = a beta-D-GlcNAc-(1-&gt;3)-beta-D-Gal-(1-&gt;4)-beta-D-Glc-(1&lt;-&gt;1)-Cer(d18:1(4E)) + UDP + H(+). It carries out the reaction a neolactoside nLc4Cer(d18:1(4E)) + UDP-N-acetyl-alpha-D-glucosamine = a neolactoside IV(3)-beta-GlcNAc-nLc4Cer(d18:1(4E)) + UDP + H(+). Its pathway is protein modification; protein glycosylation. Its function is as follows. Beta-1,3-N-acetylglucosaminyltransferase that plays a key role in the synthesis of lacto- or neolacto-series carbohydrate chains on glycolipids. The sequence is that of Lactosylceramide 1,3-N-acetyl-beta-D-glucosaminyltransferase B (b3gnt5b) from Danio rerio (Zebrafish).